Here is a 180-residue protein sequence, read N- to C-terminus: Large ribosomal subunit protein uL5 (180 aa).

The protein belongs to the universal ribosomal protein uL5 family. In terms of assembly, part of the 50S ribosomal subunit; part of the 5S rRNA/L5/L18/L25 subcomplex. Contacts the 5S rRNA and the P site tRNA. Forms a bridge to the 30S subunit in the 70S ribosome.

Its function is as follows. This is one of the proteins that bind and probably mediate the attachment of the 5S RNA into the large ribosomal subunit, where it forms part of the central protuberance. In the 70S ribosome it contacts protein S13 of the 30S subunit (bridge B1b), connecting the 2 subunits; this bridge is implicated in subunit movement. Contacts the P site tRNA; the 5S rRNA and some of its associated proteins might help stabilize positioning of ribosome-bound tRNAs. The protein is Large ribosomal subunit protein uL5 of Anaeromyxobacter sp. (strain Fw109-5).